Here is a 298-residue protein sequence, read N- to C-terminus: MSGSTLDKGKVTLTGAEETLLITLFARAKDAESPNPVLNDQYSAQVVSRIRDQGYNFSRTTLDRSDSSFFTSLVATRARVLDICCEQFLERNPGPATIIHLACGMDSRSLRLKWQGEGRLWIDADRQDVIKLRRQIMDEPAPERGEYRLTDPDIHDDAWLRDYNVPTDRPVLVLFEGLTPYLTRDEVVSLLRRITNHFRDSGVNGEIRFDAPGSISYFLINYVFNKPLRSMGTQFTWYMDDPRELETHVPGLKYRERMFVLHDYARLGNYGWLAGFLLRVADWFNIGGRIGSGYGYEF.

The protein belongs to the methyltransferase superfamily.

The protein operates within secondary metabolite biosynthesis; terpenoid biosynthesis. Its function is as follows. S-adenosyl-L-methionine-dependent methyltransferase; part of the gene cluster that mediates the biosynthesis of diterpenoid pyrones. The first step of the pathway is the synthesis of the alpha-pyrone moiety by the polyketide synthase dpfgA via condensation of one acetyl-CoA starter unit with 3 malonyl-CoA units and 2 methylations. The alpha-pyrone is then combined with geranylgeranyl pyrophosphate (GGPP) formed by the GGPP synthase dpfgD through the action of the prenyltransferase dpfgC to yield a linear alpha-pyrone diterpenoid. Subsequent steps in the diterpenoid pyrone biosynthetic pathway involve the decalin core formation, which is initiated by the epoxidation of the C10-C11 olefin by the FAD-dependent oxidoreductase dpfgE, and is followed by a cyclization cascade catalyzed by the terpene cyclase dpfgB. The short chain dehydrogenase/reductase dpfgG then oxidizes the 8S hydroxy group to a ketone and the short chain dehydrogenase/reductase dpfgH reduces the ketone to the 8R hydroxy group to yield higginsianin B. Higginsianin B is further methylated by the methyltransferase dpfgI to produce the intermediate named FDDP B. The cytochrome P450 monooxygenase dfgpJ then catalyzes a three-step oxidation at C-27 to generate a carboxylic acid as well as C-26 hydroxylation. Finally, methyltransferase dpfgK methylates the carboxylic acid generated by dpfgJ, yielding the final diterpenoid pyrones from the pathway which were named FDDP D and FDDP E. The chain is S-adenosyl-L-methionine-dependent methyltransferase dpfgK from Gibberella zeae (strain ATCC MYA-4620 / CBS 123657 / FGSC 9075 / NRRL 31084 / PH-1) (Wheat head blight fungus).